A 448-amino-acid chain; its full sequence is Tubulin beta chain (448 aa).

Residues Gln11, Glu69, Ser138, Gly142, Thr143, Gly144, Asn204, and Asn226 each contribute to the GTP site. Glu69 contacts Mg(2+).

This sequence belongs to the tubulin family. As to quaternary structure, dimer of alpha and beta chains. A typical microtubule is a hollow water-filled tube with an outer diameter of 25 nm and an inner diameter of 15 nM. Alpha-beta heterodimers associate head-to-tail to form protofilaments running lengthwise along the microtubule wall with the beta-tubulin subunit facing the microtubule plus end conferring a structural polarity. Microtubules usually have 13 protofilaments but different protofilament numbers can be found in some organisms and specialized cells. It depends on Mg(2+) as a cofactor.

It is found in the cytoplasm. It localises to the cytoskeleton. Functionally, tubulin is the major constituent of microtubules, a cylinder consisting of laterally associated linear protofilaments composed of alpha- and beta-tubulin heterodimers. Microtubules grow by the addition of GTP-tubulin dimers to the microtubule end, where a stabilizing cap forms. Below the cap, tubulin dimers are in GDP-bound state, owing to GTPase activity of alpha-tubulin. In Melampsora lini (Rust fungus), this protein is Tubulin beta chain (TUB1).